A 224-amino-acid chain; its full sequence is Oocyte zinc finger protein XlCOF6.1 (224 aa).

8 consecutive C2H2-type zinc fingers follow at residues 6–28 (FSCS…CRSH), 34–56 (FHCT…QRYH), 62–84 (FTCF…IRMH), 90–112 (FSCS…QKIH), 118–140 (FSCS…YRTH), 146–168 (FPCP…RRTH), 174–196 (FACS…RLGH), and 202–224 (FSCS…LKSH).

It belongs to the krueppel C2H2-type zinc-finger protein family.

It is found in the nucleus. In terms of biological role, may be involved in transcriptional regulation. The chain is Oocyte zinc finger protein XlCOF6.1 from Xenopus laevis (African clawed frog).